Consider the following 139-residue polypeptide: Large ribosomal subunit protein uL16 (139 aa).

Positions 1-19 are enriched in basic residues; it reads MLIPRKVKHRKQHHPKRSG. The interval 1–22 is disordered; that stretch reads MLIPRKVKHRKQHHPKRSGVAK.

This sequence belongs to the universal ribosomal protein uL16 family. In terms of assembly, part of the 50S ribosomal subunit.

Functionally, binds 23S rRNA and is also seen to make contacts with the A and possibly P site tRNAs. The protein is Large ribosomal subunit protein uL16 of Acidothermus cellulolyticus (strain ATCC 43068 / DSM 8971 / 11B).